Consider the following 327-residue polypeptide: Probable cell division protein WhiA (327 aa).

The H-T-H motif DNA-binding region spans 275–308 (SLEELGRLADPPMTKDAVAGRIRRLLSMADRKAK).

This sequence belongs to the WhiA family.

In terms of biological role, involved in cell division and chromosome segregation. The protein is Probable cell division protein WhiA of Mycobacterium marinum (strain ATCC BAA-535 / M).